Here is a 212-residue protein sequence, read N- to C-terminus: Uridine kinase (212 aa).

13 to 20 lines the ATP pocket; that stretch reads GGSGSGKT.

Belongs to the uridine kinase family.

The protein resides in the cytoplasm. The catalysed reaction is uridine + ATP = UMP + ADP + H(+). It catalyses the reaction cytidine + ATP = CMP + ADP + H(+). It participates in pyrimidine metabolism; CTP biosynthesis via salvage pathway; CTP from cytidine: step 1/3. Its pathway is pyrimidine metabolism; UMP biosynthesis via salvage pathway; UMP from uridine: step 1/1. This Bacillus cereus (strain G9842) protein is Uridine kinase.